A 660-amino-acid polypeptide reads, in one-letter code: Bifunctional polymyxin resistance protein ArnA (660 aa).

A formyltransferase ArnAFT region spans residues 1–304; it reads MKTVVFAYHD…TLGLVQGSRL (304 aa). Residue 86–88 participates in (6R)-10-formyltetrahydrofolate binding; sequence HLI. The Proton donor; for formyltransferase activity role is filled by His-104. Residues Arg-114 and 136-140 each bind (6R)-10-formyltetrahydrofolate; that span reads VKRAD. The segment at 314-660 is dehydrogenase ArnADH; it reads RRTRVLILGV…RTVDLTDKPS (347 aa). Residues Asp-347 and 368–369 each bind NAD(+); that span reads DI. UDP-alpha-D-glucuronate is bound by residues Ala-393, Tyr-398, and 432–433; that span reads TS. The active-site Proton acceptor; for decarboxylase activity is Glu-434. UDP-alpha-D-glucuronate-binding positions include Arg-460, Asn-492, 526 to 535, and Tyr-613; that span reads KLIDGGKQKR. Arg-619 serves as the catalytic Proton donor; for decarboxylase activity.

The protein in the N-terminal section; belongs to the Fmt family. UDP-L-Ara4N formyltransferase subfamily. In the C-terminal section; belongs to the NAD(P)-dependent epimerase/dehydratase family. UDP-glucuronic acid decarboxylase subfamily. Homohexamer, formed by a dimer of trimers.

It carries out the reaction UDP-alpha-D-glucuronate + NAD(+) = UDP-beta-L-threo-pentopyranos-4-ulose + CO2 + NADH. The catalysed reaction is UDP-4-amino-4-deoxy-beta-L-arabinose + (6R)-10-formyltetrahydrofolate = UDP-4-deoxy-4-formamido-beta-L-arabinose + (6S)-5,6,7,8-tetrahydrofolate + H(+). It functions in the pathway nucleotide-sugar biosynthesis; UDP-4-deoxy-4-formamido-beta-L-arabinose biosynthesis; UDP-4-deoxy-4-formamido-beta-L-arabinose from UDP-alpha-D-glucuronate: step 1/3. Its pathway is nucleotide-sugar biosynthesis; UDP-4-deoxy-4-formamido-beta-L-arabinose biosynthesis; UDP-4-deoxy-4-formamido-beta-L-arabinose from UDP-alpha-D-glucuronate: step 3/3. The protein operates within bacterial outer membrane biogenesis; lipopolysaccharide biosynthesis. Its function is as follows. Bifunctional enzyme that catalyzes the oxidative decarboxylation of UDP-glucuronic acid (UDP-GlcUA) to UDP-4-keto-arabinose (UDP-Ara4O) and the addition of a formyl group to UDP-4-amino-4-deoxy-L-arabinose (UDP-L-Ara4N) to form UDP-L-4-formamido-arabinose (UDP-L-Ara4FN). The modified arabinose is attached to lipid A and is required for resistance to polymyxin and cationic antimicrobial peptides. This chain is Bifunctional polymyxin resistance protein ArnA, found in Escherichia coli (strain K12 / MC4100 / BW2952).